A 427-amino-acid polypeptide reads, in one-letter code: MSTNAELFDRACRSIPGGVNSPVRAFRSVGGTPRFIQRAQGPYVWDAEGKQYIDYVGSWGPAILGHAHPEVVRAVQEAAVHGLSFGAPTEAEVELAEMLIARLPSLEQVRLVSSGTEATMTAIRLARGATGRHKIIKFEGCYHGHSDSLLVKAGSGLLTFGNPSSAGVPPEFVAHTLTLEFNNLAVVDAAFSQHGAEIACVIVEPVAGNMNLIKPAEGFLAGLRELCTRHGAVLIFDEVMTGFRIGPQGVQGLTGVRPDLTTLAKVIGGGMPVGAFGGRADLMTHIAPLGGVYQAGTLSGNPVAVAAGLATMRLIGEPGFYERLSAQTARLAQGLQERARAAGVPFSADAIGGMFGLYFGDRVPASFAEVSACDTEAFKRFFHAMLERGIHFAPSAFEAGFVSATHDDAVIDATLEAAEQVFATLRA.

The residue at position 265 (Lys-265) is an N6-(pyridoxal phosphate)lysine.

It belongs to the class-III pyridoxal-phosphate-dependent aminotransferase family. HemL subfamily. In terms of assembly, homodimer. It depends on pyridoxal 5'-phosphate as a cofactor.

Its subcellular location is the cytoplasm. The catalysed reaction is (S)-4-amino-5-oxopentanoate = 5-aminolevulinate. Its pathway is porphyrin-containing compound metabolism; protoporphyrin-IX biosynthesis; 5-aminolevulinate from L-glutamyl-tRNA(Glu): step 2/2. This Bordetella pertussis (strain Tohama I / ATCC BAA-589 / NCTC 13251) protein is Glutamate-1-semialdehyde 2,1-aminomutase.